The sequence spans 953 residues: Isoleucine--tRNA ligase (953 aa).

Positions 57 to 67 (PYANGDIHIGH) match the 'HIGH' region motif. Glu-582 is a binding site for L-isoleucyl-5'-AMP. The short motif at 623-627 (KMSKS) is the 'KMSKS' region element. Lys-626 contacts ATP. 4 residues coordinate Zn(2+): Cys-916, Cys-919, Cys-936, and Cys-939.

It belongs to the class-I aminoacyl-tRNA synthetase family. IleS type 1 subfamily. Monomer. Zn(2+) serves as cofactor.

The protein resides in the cytoplasm. It catalyses the reaction tRNA(Ile) + L-isoleucine + ATP = L-isoleucyl-tRNA(Ile) + AMP + diphosphate. Functionally, catalyzes the attachment of isoleucine to tRNA(Ile). As IleRS can inadvertently accommodate and process structurally similar amino acids such as valine, to avoid such errors it has two additional distinct tRNA(Ile)-dependent editing activities. One activity is designated as 'pretransfer' editing and involves the hydrolysis of activated Val-AMP. The other activity is designated 'posttransfer' editing and involves deacylation of mischarged Val-tRNA(Ile). In Bordetella bronchiseptica (strain ATCC BAA-588 / NCTC 13252 / RB50) (Alcaligenes bronchisepticus), this protein is Isoleucine--tRNA ligase.